Reading from the N-terminus, the 309-residue chain is Intron-encoded DNA endonuclease ai2a (309 aa).

It belongs to the LAGLIDADG endonuclease family.

It localises to the mitochondrion. Mitochondrial DNA endonuclease involved in intron homing. Cleaves only one strand of intronless DNA sequence at the site which coincides with the I-SceII cleavage recognition site. In Dictyostelium discoideum (Social amoeba), this protein is Intron-encoded DNA endonuclease ai2a (ai2a).